Here is a 256-residue protein sequence, read N- to C-terminus: L-erythrulose-1-phosphate isomerase (256 aa).

The active-site Electrophile is the histidine 96. The active-site Proton acceptor is the glutamate 169. The substrate site is built by glycine 175 and serine 212.

It belongs to the triosephosphate isomerase family. Homodimer.

The protein localises to the cytoplasm. It catalyses the reaction L-erythrulose 1-phosphate = D-erythrulose 4-phosphate. It functions in the pathway carbohydrate metabolism; erythritol degradation. Functionally, catalyzes the isomerization of D-erythrulose-4P to L-erythrulose-1P. Involved in the degradation pathway of erythritol, that allows B.abortus to grow on this compound as the sole carbon source. In Brucella abortus (strain 2308), this protein is L-erythrulose-1-phosphate isomerase.